Reading from the N-terminus, the 55-residue chain is Preprotein translocase subunit SecG (55 aa).

Topologically, residues 1–31 are cytoplasmic; sequence MPKNNTNENFQSGAGLIRYFNEEEIKGPALD. Residues 32–51 form a helical membrane-spanning segment; sequence PKLIIYIGIAMAVIVELAKI. The Extracellular segment spans residues 52–55; that stretch reads FWPV.

This sequence belongs to the SEC61-beta family. In terms of assembly, component of the protein translocase complex. Heterotrimer consisting of alpha (SecY), beta (SecG) and gamma (SecE) subunits. Can form oligomers of the heterotrimer.

It is found in the cell membrane. In terms of biological role, involved in protein export. The function of the beta subunit is unknown, but it may be involved in stabilization of the trimeric complex. This chain is Preprotein translocase subunit SecG, found in Picrophilus torridus (strain ATCC 700027 / DSM 9790 / JCM 10055 / NBRC 100828 / KAW 2/3).